The chain runs to 378 residues: Queuine tRNA-ribosyltransferase (378 aa).

Asp-89 (proton acceptor) is an active-site residue. Residues 89-93, Asp-143, Gln-187, and Gly-214 contribute to the substrate site; that span reads DSGGF. An RNA binding region spans residues 245–251; that stretch reads GVGKPED. Asp-264 serves as the catalytic Nucleophile. Residues 269-273 are RNA binding; important for wobble base 34 recognition; sequence TRNAR. Residues Cys-302, Cys-304, Cys-307, and His-333 each coordinate Zn(2+).

This sequence belongs to the queuine tRNA-ribosyltransferase family. In terms of assembly, homodimer. Within each dimer, one monomer is responsible for RNA recognition and catalysis, while the other monomer binds to the replacement base PreQ1. Requires Zn(2+) as cofactor.

It catalyses the reaction 7-aminomethyl-7-carbaguanine + guanosine(34) in tRNA = 7-aminomethyl-7-carbaguanosine(34) in tRNA + guanine. It participates in tRNA modification; tRNA-queuosine biosynthesis. Functionally, catalyzes the base-exchange of a guanine (G) residue with the queuine precursor 7-aminomethyl-7-deazaguanine (PreQ1) at position 34 (anticodon wobble position) in tRNAs with GU(N) anticodons (tRNA-Asp, -Asn, -His and -Tyr). Catalysis occurs through a double-displacement mechanism. The nucleophile active site attacks the C1' of nucleotide 34 to detach the guanine base from the RNA, forming a covalent enzyme-RNA intermediate. The proton acceptor active site deprotonates the incoming PreQ1, allowing a nucleophilic attack on the C1' of the ribose to form the product. After dissociation, two additional enzymatic reactions on the tRNA convert PreQ1 to queuine (Q), resulting in the hypermodified nucleoside queuosine (7-(((4,5-cis-dihydroxy-2-cyclopenten-1-yl)amino)methyl)-7-deazaguanosine). The protein is Queuine tRNA-ribosyltransferase of Yersinia enterocolitica serotype O:8 / biotype 1B (strain NCTC 13174 / 8081).